The primary structure comprises 334 residues: Aspartate carbamoyltransferase catalytic subunit (334 aa).

Residues R70 and T71 each contribute to the carbamoyl phosphate site. L-aspartate is bound at residue K98. Carbamoyl phosphate is bound by residues R120, H150, and Q153. Positions 183 and 238 each coordinate L-aspartate. Positions 279 and 280 each coordinate carbamoyl phosphate.

The protein belongs to the aspartate/ornithine carbamoyltransferase superfamily. ATCase family. As to quaternary structure, heterododecamer (2C3:3R2) of six catalytic PyrB chains organized as two trimers (C3), and six regulatory PyrI chains organized as three dimers (R2).

The enzyme catalyses carbamoyl phosphate + L-aspartate = N-carbamoyl-L-aspartate + phosphate + H(+). It participates in pyrimidine metabolism; UMP biosynthesis via de novo pathway; (S)-dihydroorotate from bicarbonate: step 2/3. Functionally, catalyzes the condensation of carbamoyl phosphate and aspartate to form carbamoyl aspartate and inorganic phosphate, the committed step in the de novo pyrimidine nucleotide biosynthesis pathway. The protein is Aspartate carbamoyltransferase catalytic subunit of Marinomonas sp. (strain MWYL1).